The sequence spans 471 residues: Cleavage and polyadenylation specificity factor subunit 7 (471 aa).

The segment at 34 to 68 (VLTAASQPSDDRSSSTEPPPPVRQEPAPKPNNKTP) is disordered. Positions 50–62 (EPPPPVRQEPAPK) are enriched in pro residues. Positions 82–162 (AAVYVGSFSW…EKVDVRPATR (81 aa)) constitute an RRM domain. Residues 176–220 (ECVRVPRGGIPPRAHSRDSSDSADGRATPSENLVPSSARVDKPPS) are disordered. The span at 190–199 (HSRDSSDSAD) shows a compositional bias: basic and acidic residues. Phosphothreonine is present on Thr203. Phosphoserine is present on Ser205. Residue Lys354 forms a Glycyl lysine isopeptide (Lys-Gly) (interchain with G-Cter in SUMO2) linkage. Residues 409–471 (SVGASGSSSR…HRDRERDRHH (63 aa)) are disordered. Phosphoserine is present on residues Ser413 and Ser423. An arg/Ser-rich domain region spans residues 418–469 (RKRHRSRERSPSRSRESSRRHRDLLHNEDRHDDYFQERNREHERHRDRERDR). 2 stretches are compositionally biased toward basic and acidic residues: residues 425–434 (ERSPSRSRES) and 441–471 (LLHNEDRHDDYFQERNREHERHRDRERDRHH).

The protein belongs to the RRM CPSF6/7 family. As to quaternary structure, component of the cleavage factor Im (CFIm) complex which is a heterotetramer composed of two subunits of NUDT21/CPSF5 and two subunits of CPSF6 or CPSF7 or a heterodimer of CPSF6 and CPSF7. The cleavage factor Im (CFIm) complex associates with the CPSF and CSTF complexes to promote the assembly of the core mRNA 3'-processing machinery. Interacts with NUDT21/CPSF5. Interacts (via Arg/Ser-rich domain) with FIP1L1 (preferentially via unphosphorylated form and Arg/Glu/Asp-rich region); this interaction mediates, at least in part, the interaction between the CFIm and CPSF complexes and may be inhibited by CPSF7 hyper-phosphorylation. Phosphorylated. Post-translationally, asymmetrically dimethylated on arginine residues by PRMT1.

The protein localises to the nucleus. It is found in the cytoplasm. Component of the cleavage factor Im (CFIm) complex that functions as an activator of the pre-mRNA 3'-end cleavage and polyadenylation processing required for the maturation of pre-mRNA into functional mRNAs. CFIm contributes to the recruitment of multiprotein complexes on specific sequences on the pre-mRNA 3'-end, so called cleavage and polyadenylation signals (pA signals). Most pre-mRNAs contain multiple pA signals, resulting in alternative cleavage and polyadenylation (APA) producing mRNAs with variable 3'-end formation. The CFIm complex acts as a key regulator of cleavage and polyadenylation site choice during APA through its binding to 5'-UGUA-3' elements localized in the 3'-untranslated region (UTR) for a huge number of pre-mRNAs. CPSF7 activates directly the mRNA 3'-processing machinery. Binds to pA signals in RNA substrates. This is Cleavage and polyadenylation specificity factor subunit 7 from Mus musculus (Mouse).